The primary structure comprises 804 residues: Angiotensin-converting enzyme 2 (804 aa).

An N-terminal signal peptide occupies residues 1 to 17 (MTGSFWLLLSLVAVTAA). Over 18–739 (QSTTEEQAKT…LGPPYEPPVT (722 aa)) the chain is Extracellular. A Peptidase M2 domain is found at 19–606 (STTEEQAKTF…QNRNSFVGWS (588 aa)). 2 N-linked (GlcNAc...) asparagine glycosylation sites follow: asparagine 53 and asparagine 90. Arginine 168 contributes to the chloride binding site. Arginine 272 contacts substrate. N-linked (GlcNAc...) asparagine glycosylation is present at asparagine 298. A disulfide bridge connects residues cysteine 343 and cysteine 360. Substrate is bound at residue 344-345 (HP). Zn(2+) is bound at residue histidine 373. Glutamate 374 acts as the Proton acceptor in catalysis. 2 residues coordinate Zn(2+): histidine 377 and glutamate 401. An N-linked (GlcNAc...) asparagine glycan is attached at asparagine 431. Chloride contacts are provided by tryptophan 476 and lysine 480. The Proton donor role is filled by histidine 504. Residue tyrosine 514 participates in substrate binding. Cysteine 529 and cysteine 541 are disulfide-bonded. N-linked (GlcNAc...) asparagine glycosylation occurs at asparagine 545. In terms of domain architecture, Collectrin-like spans 613-804 (SDQSIKVRIS…QNIDDVQTSL (192 aa)). The segment at 651–658 (RKYFSEAR) is essential for cleavage by ADAM17. Asparagine 659 and asparagine 689 each carry an N-linked (GlcNAc...) asparagine glycan. Positions 696 to 715 (RTEVENAIRLSRDRINDVFQ) are essential for cleavage by TMPRSS11D and TMPRSS2. Residues 740–760 (IWLIIFGVVMGVVVIGIVVLI) traverse the membrane as a helical segment. The Cytoplasmic segment spans residues 761 to 804 (FTGIRNRRKKNQASSEENPYGSVDLNKGENNSGFQNIDDVQTSL). Positions 771 to 804 (NQASSEENPYGSVDLNKGENNSGFQNIDDVQTSL) are disordered. Residues 777-785 (ENPYGSVDL) carry the LIR motif. Phosphotyrosine is present on tyrosine 780. Positions 780–783 (YGSV) match the Endocytic sorting signal motif. Positions 780–784 (YGSVD) match the SH2-binding motif. Position 782 is a phosphoserine (serine 782). A Glycyl lysine isopeptide (Lys-Gly) (interchain with G-Cter in ubiquitin) cross-link involves residue lysine 787. The segment covering 788-804 (GENNSGFQNIDDVQTSL) has biased composition (polar residues). Positions 791-794 (NSGF) match the PTB motif. The PDZ-binding motif lies at 802–804 (TSL).

This sequence belongs to the peptidase M2 family. As to quaternary structure, homodimer. Interacts with the catalytically active form of TMPRSS2. Interacts with SLC6A19; this interaction is essential for expression and function of SLC6A19 in intestine. Interacts with ITGA5:ITGB1. Probably interacts (via endocytic sorting signal motif) with AP2M1; the interaction is inhibited by phosphorylation of Tyr-780. Interacts (via PDZ-binding motif) with NHERF1 (via PDZ domains); the interaction may enhance ACE2 membrane residence. Requires Zn(2+) as cofactor. Chloride serves as cofactor. In terms of processing, proteolytic cleavage by ADAM17 generates a secreted form. Also cleaved by serine proteases: TMPRSS2, TMPRSS11D and HPN/TMPRSS1. Post-translationally, phosphorylated. Phosphorylation at Tyr-780 probably inhibits interaction with AP2M1 and enables interactions with proteins containing SH2 domains. Ubiquitinated. Ubiquitinated on Lys-787 via 'Lys-48'-linked ubiquitin. 'Lys-48'-linked deubiquitinated by USP50 on the Lys-787; leading to its stabilization.

It localises to the secreted. Its subcellular location is the cell membrane. The protein localises to the cytoplasm. It is found in the cell projection. The protein resides in the cilium. It localises to the apical cell membrane. It carries out the reaction angiotensin II + H2O = angiotensin-(1-7) + L-phenylalanine. The enzyme catalyses angiotensin I + H2O = angiotensin-(1-9) + L-leucine. It catalyses the reaction bradykinin(1-8) + H2O = bradykinin(1-7) + L-phenylalanine. The catalysed reaction is neurotensin + H2O = neurotensin-(1-12) + L-leucine. It carries out the reaction kinetensin + H2O = kinetensin-(1-8) + L-leucine. The enzyme catalyses dynorphin A-(1-13) + H2O = dynorphin A-(1-12) + L-lysine. It catalyses the reaction apelin-13 + H2O = apelin-12 + L-phenylalanine. The catalysed reaction is [Pyr1]apelin-13 + H2O = [Pyr1]apelin-12 + L-phenylalanine. It carries out the reaction apelin-17 + H2O = apelin-16 + L-phenylalanine. In terms of biological role, essential counter-regulatory carboxypeptidase of the renin-angiotensin hormone system that is a critical regulator of blood volume, systemic vascular resistance, and thus cardiovascular homeostasis. Converts angiotensin I to angiotensin 1-9, a nine-amino acid peptide with anti-hypertrophic effects in cardiomyocytes, and angiotensin II to angiotensin 1-7, which then acts as a beneficial vasodilator and anti-proliferation agent, counterbalancing the actions of the vasoconstrictor angiotensin II. Also removes the C-terminal residue from three other vasoactive peptides, neurotensin, kinetensin, and des-Arg bradykinin, but is not active on bradykinin. Also cleaves other biological peptides, such as apelins, casomorphins and dynorphin A. Plays an important role in amino acid transport by acting as binding partner of amino acid transporter SLC6A19 in intestine, regulating trafficking, expression on the cell surface, and its catalytic activity. The sequence is that of Angiotensin-converting enzyme 2 (ACE2) from Bos taurus (Bovine).